The sequence spans 319 residues: Acetyl-coenzyme A carboxylase carboxyl transferase subunit alpha (319 aa).

One can recognise a CoA carboxyltransferase C-terminal domain in the interval 32–293 (NVDTEVRALE…KAVLLNELEA (262 aa)).

The protein belongs to the AccA family. As to quaternary structure, acetyl-CoA carboxylase is a heterohexamer composed of biotin carboxyl carrier protein (AccB), biotin carboxylase (AccC) and two subunits each of ACCase subunit alpha (AccA) and ACCase subunit beta (AccD).

It is found in the cytoplasm. It catalyses the reaction N(6)-carboxybiotinyl-L-lysyl-[protein] + acetyl-CoA = N(6)-biotinyl-L-lysyl-[protein] + malonyl-CoA. Its pathway is lipid metabolism; malonyl-CoA biosynthesis; malonyl-CoA from acetyl-CoA: step 1/1. Its function is as follows. Component of the acetyl coenzyme A carboxylase (ACC) complex. First, biotin carboxylase catalyzes the carboxylation of biotin on its carrier protein (BCCP) and then the CO(2) group is transferred by the carboxyltransferase to acetyl-CoA to form malonyl-CoA. This Xylella fastidiosa (strain M12) protein is Acetyl-coenzyme A carboxylase carboxyl transferase subunit alpha.